Here is a 218-residue protein sequence, read N- to C-terminus: Peptidyl-prolyl cis-trans isomerase FKBP7 (218 aa).

The first 19 residues, 1–19 (MNLLFRLAVFLSLWCCSDA), serve as a signal peptide directing secretion. N-linked (GlcNAc...) asparagine glycans are attached at residues N41 and N128. In terms of domain architecture, PPIase FKBP-type spans 49-141 (GDLLNAHYDG…MFEIELYAVT (93 aa)). 2 EF-hand domains span residues 141 to 176 (TKGPRSIETFKQIDTDNDRQLSKAEIELYLQKDFEK) and 185 to 218 (YQKAVLEDIFKKNDHNGDGFISPKEYNVHQHDEL). Residues D154, D156, D158, Q160, E165, D198, N200, D202, and E209 each contribute to the Ca(2+) site. Residues 197 to 218 (NDHNGDGFISPKEYNVHQHDEL) form a disordered region. Residues 215–218 (HDEL) carry the Prevents secretion from ER motif.

Post-translationally, glycosylated. As to expression, expressed at highest levels in heart, lung and testis. Weakly expressed in kidney and lymph node. Little or no expression detected in brain, thymus, spleen and liver.

It is found in the endoplasmic reticulum lumen. The enzyme catalyses [protein]-peptidylproline (omega=180) = [protein]-peptidylproline (omega=0). In terms of biological role, PPIases accelerate the folding of proteins during protein synthesis. The sequence is that of Peptidyl-prolyl cis-trans isomerase FKBP7 (Fkbp7) from Mus musculus (Mouse).